The chain runs to 124 residues: Tax1-binding protein 3 (124 aa).

Ser-2 bears the N-acetylserine mark. Residues 15-112 (RVEIHKLRQG…EVVRLLVTRQ (98 aa)) form the PDZ domain. Ser-61 is modified (phosphoserine).

As to quaternary structure, interacts (via its PDZ domain) with GLS2. Interacts (via its PDZ domain) with RTKN (via the C-terminal region); this interaction facilitates Rho-mediated activation of the FOS serum response element (SRE). Interacts (via PDZ domain) with ARHGEF16. Interacts (via PDZ domain) with KCNJ4 (via C-terminus). Competes with LIN7A for KCNJ4 binding. Interacts (via its PDZ domain) with CTNNB1; this interaction inhibits the transcriptional activity of CTNNB1. Interacts with ADGRB2.

The protein localises to the cytoplasm. It localises to the nucleus. It is found in the cell membrane. Functionally, may regulate a number of protein-protein interactions by competing for PDZ domain binding sites. Binds CTNNB1 and may thereby act as an inhibitor of the Wnt signaling pathway. Competes with LIN7A for KCNJ4 binding, and thereby promotes KCNJ4 internalization. May play a role in the Rho signaling pathway. The polypeptide is Tax1-binding protein 3 (Mus musculus (Mouse)).